The primary structure comprises 449 residues: Nucleoprotein (449 aa).

Residues 1-55 (MSFTPGKQSSSRASSGNRSGNGILKWADQSDQSRNVQTRGRRVQSKQTATSQQPS) are disordered. Residues 9–22 (SSSRASSGNRSGNG) show a composition bias toward low complexity. Composition is skewed to polar residues over residues 29–38 (QSDQSRNVQT) and 45–55 (SKQTATSQQPS). Residues 52–194 (QQPSGGTVVP…GYYIEGSGRS (143 aa)) are RNA-binding. The CoV N NTD domain maps to 61 to 190 (PYYSWFSGIT…VLPQGYYIEG (130 aa)). RNA-binding residues include R106, R122, and R164. 3 disordered regions span residues 158-231 (PADI…VTPD), 266-297 (ILNK…NFGG), and 387-449 (MMNI…TSEI). S167 is modified (phosphoserine; by host). T174 carries the phosphothreonine; by host modification. The residue at position 191 (S191) is a Phosphoserine; by host. Composition is skewed to polar residues over residues 194-204 (SAPNSRSTSRA) and 212-227 (GSRS…STPG). Residues 259-384 (AKEVRQKILN…QNLNAYQHQE (126 aa)) enclose the CoV N CTD domain. A compositionally biased stretch (basic residues) spans 266–276 (ILNKPRQKRSP). A dimerization region spans residues 266–385 (ILNKPRQKRS…NLNAYQHQED (120 aa)). Residue S391 is modified to Phosphoserine; by host. The span at 400–410 (QKNGQVENDNV) shows a compositional bias: polar residues. Residues 423–440 (KSRELTAEDISLLKKMDE) show a composition bias toward basic and acidic residues. The residue at position 424 (S424) is a Phosphoserine; by host. T428 is modified (phosphothreonine; by host).

Belongs to the betacoronavirus nucleocapsid protein family. In terms of assembly, homooligomer. Both monomeric and oligomeric forms interact with RNA. Interacts with protein M. Interacts with NSP3; this interaction serves to tether the genome to the newly translated replicase-transcriptase complex at a very early stage of infection. Post-translationally, ADP-ribosylated. The ADP-ribosylation is retained in the virion during infection. Phosphorylated on serine and threonine residues.

It is found in the virion. Its subcellular location is the host endoplasmic reticulum-Golgi intermediate compartment. The protein localises to the host Golgi apparatus. Functionally, packages the positive strand viral genome RNA into a helical ribonucleocapsid (RNP) and plays a fundamental role during virion assembly through its interactions with the viral genome and membrane protein M. Plays an important role in enhancing the efficiency of subgenomic viral RNA transcription as well as viral replication. The sequence is that of Nucleoprotein from Sus scrofa (Pig).